A 503-amino-acid polypeptide reads, in one-letter code: Dihydropyrimidinase (503 aa).

Residues His-66, His-68, and Lys-158 each contribute to the Zn(2+) site. Lys-158 is subject to N6-carboxylysine. Tyr-163 serves as a coordination point for substrate. 3 residues coordinate Zn(2+): His-191, His-247, and Asp-325. Residue Asn-346 participates in substrate binding.

It belongs to the metallo-dependent hydrolases superfamily. Hydantoinase/dihydropyrimidinase family. Homotetramer. Requires Zn(2+) as cofactor. In terms of processing, carboxylation allows a single lysine to coordinate two zinc ions.

The catalysed reaction is 5,6-dihydrouracil + H2O = 3-(carbamoylamino)propanoate + H(+). Its function is as follows. Catalyzes the second step of the reductive pyrimidine degradation, the reversible hydrolytic ring opening of dihydropyrimidines. Can catalyze the ring opening of 5,6-dihydrouracil to N-carbamyl-alanine and of 5,6-dihydrothymine to N-carbamyl-amino isobutyrate. The polypeptide is Dihydropyrimidinase (pyd2) (Dictyostelium discoideum (Social amoeba)).